The following is a 337-amino-acid chain: Fructose-1,6-bisphosphatase class 1 (337 aa).

The Mg(2+) site is built by Glu92, Asp114, Leu116, and Asp117. Residues 117 to 120 (DGSS), Asn209, and Lys275 each bind substrate. Glu281 is a Mg(2+) binding site.

This sequence belongs to the FBPase class 1 family. Homotetramer. Mg(2+) is required as a cofactor.

The protein localises to the cytoplasm. The catalysed reaction is beta-D-fructose 1,6-bisphosphate + H2O = beta-D-fructose 6-phosphate + phosphate. The protein operates within carbohydrate biosynthesis; gluconeogenesis. The protein is Fructose-1,6-bisphosphatase class 1 of Thiobacillus denitrificans (strain ATCC 25259 / T1).